Reading from the N-terminus, the 43-residue chain is Protein PsbN (43 aa).

Residues 5-27 (TLVAIPISCLLVSFTGYALYTAF) form a helical membrane-spanning segment.

Belongs to the PsbN family.

The protein resides in the plastid. It is found in the chloroplast thylakoid membrane. Its function is as follows. May play a role in photosystem I and II biogenesis. This Sphagnum cuspidatum (Bog moss) protein is Protein PsbN.